Here is a 307-residue protein sequence, read N- to C-terminus: Oligopeptide transport ATP-binding protein OppF (307 aa).

One can recognise an ABC transporter domain in the interval V6–L251. G42 to T49 is an ATP binding site.

The protein belongs to the ABC transporter superfamily. The complex is composed of two ATP-binding proteins (OppD and OppF), two transmembrane proteins (OppB and OppC) and a solute-binding protein (OppA).

Its subcellular location is the cell membrane. The enzyme catalyses a [peptide](out) + ATP + H2O = a [peptide](in) + ADP + phosphate + H(+). Functionally, part of the ABC transporter complex OppABCDF involved in the uptake of oligopeptides. Probably responsible for energy coupling to the transport system. The sequence is that of Oligopeptide transport ATP-binding protein OppF (oppF) from Streptococcus pyogenes serotype M1.